An 851-amino-acid chain; its full sequence is Transforming growth factor beta receptor type 3 (851 aa).

An N-terminal signal peptide occupies residues 1–20 (MTSHYVIAIFALMSSCLATA). The Extracellular portion of the chain corresponds to 21-787 (GPEPGALCEL…IFHGLDTLTV (767 aa)). A disulfide bridge connects residues C52 and C197. N-linked (GlcNAc...) asparagine glycosylation is found at N141 and N492. The ZP domain maps to 455 to 730 (KCDNEKMIVA…PKCVPPDEAC (276 aa)). Residues S534 and S545 are each glycosylated (O-linked (Xyl...) (glycosaminoglycan) serine). 3 N-linked (GlcNAc...) asparagine glycosylation sites follow: N571, N590, and N697. 3 cysteine pairs are disulfide-bonded: C639/C705, C660/C730, and C710/C723. An interaction with TGF-beta ligand region spans residues 737–751 (IIWAMMQNKKTFTKP). Residues 788-809 (MGIAFAAFVIGALLTGALWYIY) form a helical membrane-spanning segment. Topologically, residues 810 to 851 (SHTGETAGRQQVPTSPPASENSSAAHSIGSTQSTPCSSSSTA) are cytoplasmic. Residues 816 to 851 (AGRQQVPTSPPASENSSAAHSIGSTQSTPCSSSSTA) form a disordered region. The span at 817-834 (GRQQVPTSPPASENSSAA) shows a compositional bias: polar residues. The span at 836 to 851 (SIGSTQSTPCSSSSTA) shows a compositional bias: low complexity. T840 bears the Phosphothreonine mark.

Forms homodimers and homooligomers. Interacts with DYNLT4. Interacts with integrin ITGA5:ITGB1; this interaction promotes the internalization and trafficking of ITGA5:ITGB1 into endocytic vesicles. Interacts with TGFB1, BMP2, BMP5, BMP7 or GDF5 and inhibin A via the ligand binding domains. Interacts with ALK3/BMPR1A; this interaction results in the cell surface retention of BMPR1A. Interacts with ALK6/BMPR1B; this interaction enhances BMPR1B-mediated stimulation of the BMP signaling pathway. Interacts with the scaffolding protein beta-arrestin2/ARRB2; this interaction mediates internalization of TGFBR3 and thus regulates migration, actin cytoskeleton and activation of CDC42. As to quaternary structure, (Microbial infection) Interacts with human cytomegalovirus trimer complex composed of gH, gL, and gO; these interactions may promote HCMV cell entry in specific cell types. In terms of processing, extensively modified by glycosaminoglycan groups (GAG). Post-translationally, phosphorylated in the cytoplasmic domain by the type II receptor TGFBR2 at THR-840 to mediate recruitment of ARRB2 and subsequent internalization of TGFBR2 and TGFBR3.

The protein localises to the cell membrane. Its subcellular location is the secreted. The protein resides in the extracellular space. It is found in the extracellular matrix. Functionally, cell surface receptor that regulates diverse cellular processes including cell proliferation, differentiation, migration, and apoptosis. Initiates BMP, inhibin, and TGF-beta signaling pathways by interacting with different ligands including TGFB1, BMP2, BMP5, BMP7 or GDF5. Alternatively, acts as a cell surface coreceptor for BMP ligands, serving to enhance ligand binding by differentially regulating BMPR1A/ALK3 and BMPR1B/ALK6 receptor trafficking. Promotes epithelial cell adhesion, focal adhesion formation and integrin signaling during epithelial cell spreading on fibronectin. By interacting with the scaffolding protein beta-arrestin2/ARRB2, regulates migration or actin cytoskeleton and promotes the activation of CDC42 as well as the inhibition of NF-kappa-B. In gonadotrope cells, acts as an inhibin A coreceptor and regulates follicle-stimulating hormone (FSH) levels and female fertility. Plays a role in the inhibition of directed and random cell migration in epithelial cells by altering the actin cytoskeletal organization. Participates in epithelial-mesenchymal transformation (EMT) upon binding to BMP2 or TGFB2, by activating the PAR6/SMURF1/RHOA pathway. In terms of biological role, (Microbial infection) May act as a receptor for human cytomegalovirus in different cell types by interacting with HCMV trimer composed of GO, GH and GL. The polypeptide is Transforming growth factor beta receptor type 3 (Homo sapiens (Human)).